A 120-amino-acid polypeptide reads, in one-letter code: MADTVTSARATARYVRVTPMKARRVIDTVRGKSVEEALDILKYAPQSASEPVYKVVASAAANAENNFGLDRNSLVIAQAWADEGPTMRRFRPRAQGRAFHVRKRTSHITVVVESQKGSAQ.

Belongs to the universal ribosomal protein uL22 family. Part of the 50S ribosomal subunit.

This protein binds specifically to 23S rRNA; its binding is stimulated by other ribosomal proteins, e.g. L4, L17, and L20. It is important during the early stages of 50S assembly. It makes multiple contacts with different domains of the 23S rRNA in the assembled 50S subunit and ribosome. In terms of biological role, the globular domain of the protein is located near the polypeptide exit tunnel on the outside of the subunit, while an extended beta-hairpin is found that lines the wall of the exit tunnel in the center of the 70S ribosome. The polypeptide is Large ribosomal subunit protein uL22 (Corynebacterium kroppenstedtii (strain DSM 44385 / JCM 11950 / CIP 105744 / CCUG 35717)).